Reading from the N-terminus, the 500-residue chain is Probable transcription factor FPSE_09189 (500 aa).

Disordered regions lie at residues 161 to 197 (MVRH…PSLA) and 457 to 500 (IRTG…TQLE). Residues 459-474 (TGHEDSSRDGGRENKA) are compositionally biased toward basic and acidic residues. The span at 475 to 484 (MNRNRSTGNS) shows a compositional bias: polar residues.

The protein resides in the nucleus. Functionally, the two putative transcription factors FPSE_09188 and FPSE_09189 could be responsible for orchestrating expression of the W493 A and B biosynthesis cluster genes. W493 A and B consist of six amino acid residues D-allo-thr, L-Ala, D-Ala, L-Gln, D-Tyr, and L-Val/L-Ile linked to a 3-hydroxy-4-methyltetradecanoic acid polyketide chain. This chain is Probable transcription factor FPSE_09189, found in Fusarium pseudograminearum (strain CS3096) (Wheat and barley crown-rot fungus).